The primary structure comprises 27 residues: Alpha-benincasin (27 aa).

Its function is as follows. Has weak antifungal activity toward C.comatus and P.piricola but not toward M.arachidicola. Inhibits cell-free translation in rabbit reticulocyte lysate system. The chain is Alpha-benincasin from Benincasa hispida (Wax gourd).